The chain runs to 83 residues: Apolipoprotein C-I, basic form (83 aa).

The N-terminal stretch at 1–26 (MRLFLSLPVLVVVLSIVLEGPAPAQG) is a signal peptide.

The protein belongs to the apolipoprotein C1 family.

Its subcellular location is the secreted. Its function is as follows. Inhibitor of lipoprotein binding to the low density lipoprotein (LDL) receptor, LDL receptor-related protein, and very low density lipoprotein (VLDL) receptor. Associates with high density lipoproteins (HDL) and the triacylglycerol-rich lipoproteins in the plasma and makes up about 10% of the protein of the VLDL and 2% of that of HDL. Appears to interfere directly with fatty acid uptake and is also the major plasma inhibitor of cholesteryl ester transfer protein (CETP). Binds free fatty acids and reduces their intracellular esterification. Modulates the interaction of APOE with beta-migrating VLDL and inhibits binding of beta-VLDL to the LDL receptor-related protein. The chain is Apolipoprotein C-I, basic form (APOC1B) from Pan troglodytes (Chimpanzee).